The following is a 662-amino-acid chain: Zinc finger protein 800 (662 aa).

The segment at Phe69 to Tyr91 adopts a C2H2-type 1; degenerate zinc-finger fold. Lys132 participates in a covalent cross-link: Glycyl lysine isopeptide (Lys-Gly) (interchain with G-Cter in SUMO2). Disordered regions lie at residues Glu172–Ile197 and Ala205–Ser224. Residues Ala205 to Gln216 are compositionally biased toward low complexity. The C2H2-type 2 zinc-finger motif lies at Leu231 to His254. A Glycyl lysine isopeptide (Lys-Gly) (interchain with G-Cter in SUMO2) cross-link involves residue Lys280. Residues Arg288–His311 form a C2H2-type 3 zinc finger. Ser318 carries the phosphoserine modification. The interval Ile319–Ser349 is disordered. Residue Thr320 is modified to Phosphothreonine. At Ser337 the chain carries Phosphoserine. The span at Lys340–Ser349 shows a compositional bias: basic residues. The C2H2-type 4 zinc-finger motif lies at Thr357–His382. Residues Ala389 to Pro473 are disordered. A Glycyl lysine isopeptide (Lys-Gly) (interchain with G-Cter in SUMO2) cross-link involves residue Lys392. The segment covering Val414–His434 has biased composition (polar residues). Residues Ser420, Ser424, Ser453, Ser455, Ser458, and Ser460 each carry the phosphoserine modification. Low complexity predominate over residues Pro456 to Gln468. Lys474 is covalently cross-linked (Glycyl lysine isopeptide (Lys-Gly) (interchain with G-Cter in SUMO2)). C2H2-type zinc fingers lie at residues Leu484–His506 and Tyr517–His540. Disordered stretches follow at residues Arg573–Lys597 and His633–Val662. Basic and acidic residues predominate over residues Pro575–Gln587. Residue Lys597 forms a Glycyl lysine isopeptide (Lys-Gly) (interchain with G-Cter in SUMO2) linkage. Residues His616–His638 form a C2H2-type 7 zinc finger. Over residues Thr651 to Val662 the composition is skewed to basic residues.

The protein belongs to the krueppel C2H2-type zinc-finger protein family.

It is found in the nucleus. May be involved in transcriptional regulation. This Mus musculus (Mouse) protein is Zinc finger protein 800 (Znf800).